Here is a 387-residue protein sequence, read N- to C-terminus: Homoserine O-succinyltransferase (387 aa).

The region spanning 45-354 (NAVLVCHALN…DAPHGHDAFL (310 aa)) is the AB hydrolase-1 domain. S151 (nucleophile) is an active-site residue. R221 provides a ligand contact to substrate. Active-site residues include D317 and H350. A substrate-binding site is contributed by D351.

Belongs to the AB hydrolase superfamily. MetX family. In terms of assembly, homodimer.

It is found in the cytoplasm. The catalysed reaction is L-homoserine + succinyl-CoA = O-succinyl-L-homoserine + CoA. It participates in amino-acid biosynthesis; L-methionine biosynthesis via de novo pathway; O-succinyl-L-homoserine from L-homoserine: step 1/1. Transfers a succinyl group from succinyl-CoA to L-homoserine, forming succinyl-L-homoserine. The chain is Homoserine O-succinyltransferase from Methylibium petroleiphilum (strain ATCC BAA-1232 / LMG 22953 / PM1).